The chain runs to 438 residues: Enolase (438 aa).

Substrate contacts are provided by His159 and Glu168. Glu211 acts as the Proton donor in catalysis. Residues Asp246, Glu297, and Asp322 each coordinate Mg(2+). Substrate-binding residues include Glu297 and Asp322. The Proton acceptor role is filled by Lys347. Residues Ser374–Ser377 and Lys398 each bind substrate.

Belongs to the enolase family. In terms of assembly, homodimer. Mg(2+) is required as a cofactor.

It localises to the cytoplasm. The enzyme catalyses (2R)-2-phosphoglycerate = phosphoenolpyruvate + H2O. Its pathway is carbohydrate degradation; glycolysis; pyruvate from D-glyceraldehyde 3-phosphate: step 4/5. This Cryphonectria parasitica (Chestnut blight fungus) protein is Enolase (ENO1).